We begin with the raw amino-acid sequence, 616 residues long: Chaperone protein DnaK (616 aa).

Position 175 is a phosphothreonine; by autocatalysis (Thr-175). The segment at 579-616 is disordered; sequence GGDPSQAGGFDPNAAGGAQQEPHDDNVVDADFKVDDDK. The span at 599-616 shows a compositional bias: basic and acidic residues; it reads EPHDDNVVDADFKVDDDK.

It belongs to the heat shock protein 70 family.

Functionally, acts as a chaperone. The polypeptide is Chaperone protein DnaK (Clostridium botulinum (strain Eklund 17B / Type B)).